The sequence spans 62 residues: Large ribosomal subunit protein uL30 (62 aa).

Belongs to the universal ribosomal protein uL30 family. As to quaternary structure, part of the 50S ribosomal subunit.

The sequence is that of Large ribosomal subunit protein uL30 from Halalkalibacterium halodurans (strain ATCC BAA-125 / DSM 18197 / FERM 7344 / JCM 9153 / C-125) (Bacillus halodurans).